Consider the following 355-residue polypeptide: Peptide chain release factor 1 (355 aa).

An N5-methylglutamine modification is found at glutamine 231.

Belongs to the prokaryotic/mitochondrial release factor family. In terms of processing, methylated by PrmC. Methylation increases the termination efficiency of RF1.

It is found in the cytoplasm. Functionally, peptide chain release factor 1 directs the termination of translation in response to the peptide chain termination codons UAG and UAA. The polypeptide is Peptide chain release factor 1 (Erythrobacter litoralis (strain HTCC2594)).